The chain runs to 466 residues: MAKTLYEKLFDAHVVYEAENETPLLYIDRHLVHEVTSPQAFDGLRAHGRPVRQPGKTFATMDHNVSTQTKDINACGEMARIQMQELIKNCKEFGVELYDLNHPYQGIVHVMGPEQGVTLPGMTIVCGDSHTATHGAFGALAFGIGTSEVEHVLATQTLKQGRAKTMKIEVQGKAAPGITAKDIVLAIIGKTGSAGGTGHVVEFCGEAIRDLSMEGRMTLCNMAIEMGAKAGLVAPDETTFNYVKGRLHAPKGKDFDDAVAYWKTLQTDEGATFDTVVTLQAEEISPQVTWGTNPGQVISVNDNIPDPASFADPVERASAEKALAYMGLKPGILLTEVAIDKVFIGSCTNSRIEDLRAAAEIAKGRKVAPGVQALVVPGSGPVKAQAEAEGLDKIFIEAGFEWRLPGCSMCLAMNNDRLNPGERCASTSNRNFEGRQGRGGRTHLVSPAMAAAAAVTGHFADIRNIK.

[4Fe-4S] cluster is bound by residues Cys-347, Cys-407, and Cys-410.

The protein belongs to the aconitase/IPM isomerase family. LeuC type 1 subfamily. Heterodimer of LeuC and LeuD. [4Fe-4S] cluster is required as a cofactor.

The catalysed reaction is (2R,3S)-3-isopropylmalate = (2S)-2-isopropylmalate. Its pathway is amino-acid biosynthesis; L-leucine biosynthesis; L-leucine from 3-methyl-2-oxobutanoate: step 2/4. Its function is as follows. Catalyzes the isomerization between 2-isopropylmalate and 3-isopropylmalate, via the formation of 2-isopropylmaleate. The sequence is that of 3-isopropylmalate dehydratase large subunit from Escherichia coli O157:H7.